A 116-amino-acid chain; its full sequence is Large ribosomal subunit protein bL20 (116 aa).

It belongs to the bacterial ribosomal protein bL20 family.

Functionally, binds directly to 23S ribosomal RNA and is necessary for the in vitro assembly process of the 50S ribosomal subunit. It is not involved in the protein synthesizing functions of that subunit. The chain is Large ribosomal subunit protein bL20 from Desulfosudis oleivorans (strain DSM 6200 / JCM 39069 / Hxd3) (Desulfococcus oleovorans).